A 35-amino-acid polypeptide reads, in one-letter code: Riboflavin-binding protein (35 aa).

Cysteine 5 and cysteine 32 form a disulfide bridge.

The protein belongs to the folate receptor family.

Functionally, required for the transport of riboflavin to the developing oocyte. In Struthio camelus (Common ostrich), this protein is Riboflavin-binding protein.